Here is a 1409-residue protein sequence, read N- to C-terminus: Tensin-2 (1409 aa).

A disordered region spans residues 1-35 (MKSSGPVERLLRALGRRDSSRAASRPRKAEPHSFR). Residues 9-20 (RLLRALGRRDSS) show a composition bias toward basic and acidic residues. The Phorbol-ester/DAG-type zinc-finger motif lies at 31 to 79 (PHSFREKVFRKKPPVCAVCKVTIDGTGVSCRVCKVATHRKCEAKVTSAC). A Phosphothreonine modification is found at threonine 91. Phosphoserine is present on residues serine 118 and serine 120. Positions 122–294 (DPLMERRWDL…SYFSGLLSGS (173 aa)) constitute a Phosphatase tensin-type domain. Cysteine 231 acts as the Phosphocysteine intermediate in catalysis. Residues 299–425 (SSPLFLHYVL…ASVEFVFSSS (127 aa)) form the C2 tensin-type domain. Serine 455 carries the post-translational modification Phosphoserine. Tyrosine 456 is modified (phosphotyrosine). The disordered stretch occupies residues 462 to 536 (HHEDSVDGSL…SPGRPPPTAA (75 aa)). Residue serine 466 is modified to Phosphoserine. Threonine 474 carries the phosphothreonine modification. Residue serine 481 is modified to Phosphoserine. Tyrosine 483 carries the post-translational modification Phosphotyrosine. Pro residues predominate over residues 491 to 506 (RQTPPAPSPEPPPPPM). Position 555 is an omega-N-methylarginine (arginine 555). Disordered regions lie at residues 562-582 (AILD…GVYP), 812-1098 (PGEG…SSPA), and 1111-1130 (LSDN…QSNV). A phosphoserine mark is found at serine 820, serine 825, serine 830, serine 832, serine 835, and serine 845. Composition is skewed to polar residues over residues 900–918 (SASS…SSPV) and 930–940 (RSPTSAPTQRL). Threonine 910 is modified (phosphothreonine). Residues serine 931, serine 941, and serine 972 each carry the phosphoserine modification. Positions 968-982 (PLAPSPVSPTFPPSS) are enriched in pro residues. Threonine 977 carries the post-translational modification Phosphothreonine. 2 positions are modified to phosphoserine: serine 991 and serine 1003. Over residues 1046-1056 (PEPPQSSPTPA) the composition is skewed to pro residues. Residues 1140–1247 (WYKPHLSRDQ…SLPCCLRIPS (108 aa)) form the SH2 domain. Threonine 1182 bears the Phosphothreonine mark. Serine 1247 is subject to Phosphoserine. The 134-residue stretch at 1275-1408 (ACSVLYLTSV…FITKVLLGQR (134 aa)) folds into the PTB domain.

The protein belongs to the PTEN phosphatase protein family. In terms of assembly, interacts with AXL. Interacts with SYK; leading to its phosphorylation. Interacts with SQSTM1 (via PB1 domain); the interaction leads to sequestration of TNS2 in cytoplasmic aggregates with SQSTM1 and promotes TNS2 ubiquitination and proteasomal degradation. In terms of processing, ubiquitinated following sequestration in cytoplasmic aggregates with SQSTM1, leading to proteasomal degradation. As to expression, detected in heart, kidney, brain, thymus, spleen, liver, placenta, lung, skeletal muscle and small intestine.

The protein resides in the cell junction. It is found in the focal adhesion. It localises to the cell membrane. Its subcellular location is the cytoplasm. The catalysed reaction is O-phospho-L-tyrosyl-[protein] + H2O = L-tyrosyl-[protein] + phosphate. Tyrosine-protein phosphatase which regulates cell motility, proliferation and muscle-response to insulin. Phosphatase activity is mediated by binding to phosphatidylinositol-3,4,5-triphosphate (PtdIns(3,4,5)P3) via the SH2 domain. In muscles and under catabolic conditions, dephosphorylates IRS1 leading to its degradation and muscle atrophy. Negatively regulates PI3K-AKT pathway activation. Dephosphorylates nephrin NPHS1 in podocytes which regulates activity of the mTORC1 complex. Under normal glucose conditions, NPHS1 outcompetes IRS1 for binding to phosphatidylinositol 3-kinase (PI3K) which balances mTORC1 activity but high glucose conditions lead to up-regulation of TNS2, increased NPHS1 dephosphorylation and activation of mTORC1, contributing to podocyte hypertrophy and proteinuria. Required for correct podocyte morphology, podocyte-glomerular basement membrane interaction and integrity of the glomerular filtration barrier. Enhances RHOA activation in the presence of DLC1. Plays a role in promoting DLC1-dependent remodeling of the extracellular matrix. This is Tensin-2 (TNS2) from Homo sapiens (Human).